A 527-amino-acid chain; its full sequence is Dual specificity protein kinase shkA (527 aa).

Residues 45–304 form the Protein kinase domain; that stretch reads ITTESILGDG…GIVSELEEII (260 aa). ATP is bound by residues 51 to 59 and lysine 72; that span reads LGDGSFGTV. The Proton acceptor role is filled by aspartate 167. The SH2 domain occupies 424–513; the sequence is WFHGDISTSE…INTPCLGSRF (90 aa).

This sequence belongs to the protein kinase superfamily. TKL Ser/Thr protein kinase family. SH2 domain-containing protein kinase subfamily.

The protein resides in the membrane. It catalyses the reaction L-seryl-[protein] + ATP = O-phospho-L-seryl-[protein] + ADP + H(+). The enzyme catalyses L-threonyl-[protein] + ATP = O-phospho-L-threonyl-[protein] + ADP + H(+). Its function is as follows. Required for proper chemotaxis and phagocytosis; proper spatiotemporal control of F-actin levels in chemotaxing cells. Negative regulator of the PI3K (phosphatidylinositol 3 kinase) pathway. Predominantly phosphorylates serines and threonines and tyrosines at a lower level. The chain is Dual specificity protein kinase shkA (shkA) from Dictyostelium discoideum (Social amoeba).